The sequence spans 847 residues: Histidine decarboxylase (847 aa).

2 residues coordinate substrate: Phe-80 and His-193. Position 304 is an N6-(pyridoxal phosphate)lysine (Lys-304). The segment covering 575–605 has biased composition (polar residues); that stretch reads GNGATRTSTTNSYGHTTSAAQANSERQASIQ. 3 disordered regions span residues 575 to 662, 769 to 798, and 813 to 847; these read GNGA…RSSP, QSQS…MSSL, and SQPM…MESL. Acidic residues predominate over residues 606–616; sequence EDNEESPEETE. Composition is skewed to low complexity over residues 634 to 657 and 769 to 787; these read SLST…TQSS and QSQS…LSGG. The segment covering 832–847 has biased composition (polar residues); sequence DSDATVCSTTSSMESL.

It belongs to the group II decarboxylase family. As to quaternary structure, homodimer. Pyridoxal 5'-phosphate is required as a cofactor. In terms of tissue distribution, localized primarily to the photoreceptors, in the eye.

The catalysed reaction is L-histidine + H(+) = histamine + CO2. In terms of biological role, required in photoreceptor transmitter synthesis. Catlayzes the conversion of L-histidine to histamine. This Drosophila melanogaster (Fruit fly) protein is Histidine decarboxylase (Hdc).